The sequence spans 238 residues: Protein MIS12 homolog (238 aa).

A coiled-coil region spans residues 117–149 (ELDAELDSLRDKLNVVGKRSVELDSELQALERS).

Belongs to the mis12 family.

The protein resides in the chromosome. The protein localises to the centromere. It localises to the kinetochore. Its function is as follows. Constitutive component of kinetochores that is essential for proper cell division during mitotic cell cycle. May play a role in the modulation of centromere during meiosis. This Arabidopsis thaliana (Mouse-ear cress) protein is Protein MIS12 homolog.